The sequence spans 205 residues: Protein phosphatase inhibitor 2 family member C (205 aa).

Disordered regions lie at residues 1 to 51 (MSAS…DESS) and 70 to 114 (EPGT…DHSC). Positions 12–17 (KGILKN) are required for binding PPP1CC. Residues 19–34 (SSSGSSVATSGQQSGG) are compositionally biased toward low complexity. A required for binding PPP1CC region spans residues 43-55 (KSQKWDESSILAT). Basic and acidic residues predominate over residues 84–102 (DSVRDVEGEDSVRGVEGKE). Positions 147–150 (HYNE) are required for binding PPP1CC catalytic center, displacing metal ions and inhibition of PPP1CC catalytic activity. The disordered stretch occupies residues 165–205 (LQSEDDENEERPQATNEEKTAAEESEEAPLSGGLQTQSCDP). Over residues 174 to 186 (ERPQATNEEKTAA) the composition is skewed to basic and acidic residues.

The protein belongs to the protein phosphatase inhibitor 2 family.

Its function is as follows. Functions as a protein phosphatase inhibitor. It inhibits activity of the catalytic subunit of PP1 and weakly inhibits the activity of myosin-associated phosphates. The chain is Protein phosphatase inhibitor 2 family member C (PPP1R2C) from Macaca fascicularis (Crab-eating macaque).